An 80-amino-acid polypeptide reads, in one-letter code: RNA-binding protein Hfq (80 aa).

A Sm domain is found at 10 to 70; the sequence is DLFLNTVRKQ…ISTIMPGQPM (61 aa).

Belongs to the Hfq family. Homohexamer.

RNA chaperone that binds small regulatory RNA (sRNAs) and mRNAs to facilitate mRNA translational regulation in response to envelope stress, environmental stress and changes in metabolite concentrations. Also binds with high specificity to tRNAs. The polypeptide is RNA-binding protein Hfq (Rhizobium rhizogenes (strain K84 / ATCC BAA-868) (Agrobacterium radiobacter)).